Consider the following 78-residue polypeptide: Defensin-like protein 74 (78 aa).

The signal sequence occupies residues 1–28; sequence MNYKIGIMSLLVITSIIFLFLVPDKVEA. 4 cysteine pairs are disulfide-bonded: Cys-32/Cys-73, Cys-36/Cys-58, Cys-42/Cys-71, and Cys-46/Cys-72.

This sequence belongs to the DEFL family.

It is found in the secreted. This Arabidopsis thaliana (Mouse-ear cress) protein is Defensin-like protein 74 (LCR43).